A 46-amino-acid chain; its full sequence is MEVTPLETGRARSHQKASTAAQPHAADEKMTGSTARRYLSQDHQSV.

The tract at residues methionine 1–valine 46 is disordered.

This is an uncharacterized protein from Treponema pallidum (strain Nichols).